A 190-amino-acid polypeptide reads, in one-letter code: Glucose-6-phosphate isomerase (190 aa).

Fe cation-binding residues include histidine 89, histidine 91, glutamate 98, and histidine 137.

It belongs to the archaeal-type GPI family. Homodimer. Fe cation serves as cofactor.

It localises to the cytoplasm. It carries out the reaction alpha-D-glucose 6-phosphate = beta-D-fructose 6-phosphate. It functions in the pathway carbohydrate degradation; glycolysis; D-glyceraldehyde 3-phosphate and glycerone phosphate from D-glucose: step 2/4. Its activity is regulated as follows. Inhibited by mannose 6-phosphate, fructose 1-phosphate and fructose 1,6-bisphosphate. Its activity is also inhibited by Cobalt (II) ions &lt; EDTA &lt; nickel (II) ions &lt; zinc (II) ions &lt;&lt; cadmium (II) ions &lt; copper (II) ions. Sodium and potassium ions and manganese ions show little or no effect on activity. This chain is Glucose-6-phosphate isomerase (pgiA), found in Thermococcus litoralis.